The chain runs to 675 residues: Putative elongation factor TypA-like SVR3, chloroplastic (675 aa).

Residues 1-58 (MELSLSTSSASPAVLRRQASPLLHKQQVLGVSFASALKPGGGALRFPSRRPLPRPITC) constitute a chloroplast transit peptide. Residues 43 to 76 (ALRFPSRRPLPRPITCSASPSTAEPASEVKKKQL) are disordered. Low complexity predominate over residues 59–68 (SASPSTAEPA). One can recognise a tr-type G domain in the interval 80 to 275 (DNVRNIAIVA…AIIRCVPGPN (196 aa)).

Belongs to the TRAFAC class translation factor GTPase superfamily. Classic translation factor GTPase family. BipA subfamily.

The protein localises to the plastid. The protein resides in the chloroplast. Its function is as follows. Putative chloroplastic elongation factor involved in response to chilling stress. Required for proper chloroplast rRNA processing and/or translation at low temperature. Involved in plastid protein homeostasis. This Arabidopsis thaliana (Mouse-ear cress) protein is Putative elongation factor TypA-like SVR3, chloroplastic (SVR3).